Here is an 834-residue protein sequence, read N- to C-terminus: WPP domain-associated protein (834 aa).

Coiled coils occupy residues 410-456, 574-700, and 792-812; these read SFGN…RLQH, SLDT…VLAI, and AEAE…LVEK.

Interacts with MAF1. In terms of tissue distribution, expressed in seedlings, leaves and fruits.

The protein resides in the golgi apparatus. The protein localises to the cytoplasm. In Solanum lycopersicum (Tomato), this protein is WPP domain-associated protein (WAP).